The chain runs to 151 residues: Small ribosomal subunit protein uS9 (151 aa).

The protein belongs to the universal ribosomal protein uS9 family.

In Aeropyrum pernix (strain ATCC 700893 / DSM 11879 / JCM 9820 / NBRC 100138 / K1), this protein is Small ribosomal subunit protein uS9 (rps9).